The chain runs to 91 residues: Large ribosomal subunit protein uL23c (91 aa).

The protein belongs to the universal ribosomal protein uL23 family. In terms of assembly, part of the 50S ribosomal subunit.

Its subcellular location is the plastid. The protein resides in the chloroplast. Its function is as follows. Binds to 23S rRNA. The sequence is that of Large ribosomal subunit protein uL23c (rpl23) from Physcomitrium patens (Spreading-leaved earth moss).